Here is a 433-residue protein sequence, read N- to C-terminus: O-methyltransferase aclM (433 aa).

A coiled-coil region spans residues 5–37 (LTDAERTALQTSLEALNRQVEATRNILRSNSQK). Residues aspartate 277 and 311-313 (GDF) contribute to the S-adenosyl-L-methionine site. The active-site Proton acceptor is the histidine 330.

Belongs to the class I-like SAM-binding methyltransferase superfamily. Cation-independent O-methyltransferase family. COMT subfamily.

The protein operates within mycotoxin biosynthesis. In terms of biological role, O-methyltransferase; part of the gene cluster that mediates the biosynthesis of aspirochlorine (or antibiotic A30641), an unusual halogenated spiro compound with distinctive antifungal properties due to selective inhibition of protein biosynthesis, and which is also active against bacteria, viruses, and murine tumor cells. The non-ribosomal peptide synthetase (NRPS) aclP is responsible the formation of the diketopiperazine (DKP) core from the condensation of 2 phenylalanine residues. One Phe residue is tailored into chlorotyrosine by hydroxylation and chlorination, whereas the second Phe undergoes an unprecedented C-C bond cleavage to be converted into glycine. After formation of the DKP, sulfur is incorporated into the DKP by conjugation with glutathione by aclG, followed by its stepwise degradation to the thiol by aclI, aclJ and aclK, and the dithiol oxidation by aclT. In addition, oxygenases (aclB, aclC, aclL and aclO) and O-methyltransferases (aclM and aclU) act as tailoring enzymes to produce the intermediate dechloroaspirochlorine. Ultimately, chlorination of dechloroaspirochlorine by the halogenase aclH is the last step in the aspirochlorine pathway. This chain is O-methyltransferase aclM, found in Aspergillus oryzae (strain ATCC 42149 / RIB 40) (Yellow koji mold).